A 123-amino-acid polypeptide reads, in one-letter code: Small ribosomal subunit protein uS12 (123 aa).

Asp89 is modified (3-methylthioaspartic acid). Residues Thr104–Lys123 form a disordered region. Over residues Ala113–Lys123 the composition is skewed to basic residues.

It belongs to the universal ribosomal protein uS12 family. In terms of assembly, part of the 30S ribosomal subunit. Contacts proteins S8 and S17. May interact with IF1 in the 30S initiation complex.

Functionally, with S4 and S5 plays an important role in translational accuracy. Its function is as follows. Interacts with and stabilizes bases of the 16S rRNA that are involved in tRNA selection in the A site and with the mRNA backbone. Located at the interface of the 30S and 50S subunits, it traverses the body of the 30S subunit contacting proteins on the other side and probably holding the rRNA structure together. The combined cluster of proteins S8, S12 and S17 appears to hold together the shoulder and platform of the 30S subunit. This is Small ribosomal subunit protein uS12 from Neisseria meningitidis serogroup C (strain 053442).